Reading from the N-terminus, the 870-residue chain is Endoribonuclease YSH1 (870 aa).

Positions 159, 161, 163, 164, 256, and 277 each coordinate Zn(2+). His-499 acts as the Proton donor in catalysis. Position 521 (His-521) interacts with Zn(2+). The tract at residues 598–627 (ITELTEEKEEADEIKEDNGETDTTQKPNES) is disordered. Residues 601 to 612 (LTEEKEEADEIK) are compositionally biased toward acidic residues. Over residues 618–627 (TDTTQKPNES) the composition is skewed to polar residues.

The protein belongs to the metallo-beta-lactamase superfamily. RNA-metabolizing metallo-beta-lactamase-like family. CPSF2/YSH1 subfamily.

The protein localises to the nucleus. Component of the cleavage factor I (CF I) involved in pre-mRNA 3'-end processing. The polypeptide is Endoribonuclease YSH1 (YSH1) (Candida albicans (strain SC5314 / ATCC MYA-2876) (Yeast)).